The following is a 45-amino-acid chain: Defensin Tk-AMP-D3 (45 aa).

Intrachain disulfides connect Cys-3/Cys-45, Cys-14/Cys-34, Cys-20/Cys-39, and Cys-24/Cys-41.

Plant defense peptide. The chain is Defensin Tk-AMP-D3 from Triticum kiharae (Wheat).